A 498-amino-acid polypeptide reads, in one-letter code: Probable malate:quinone oxidoreductase 2 (498 aa).

The protein belongs to the MQO family. The cofactor is FAD.

It catalyses the reaction (S)-malate + a quinone = a quinol + oxaloacetate. It functions in the pathway carbohydrate metabolism; tricarboxylic acid cycle; oxaloacetate from (S)-malate (quinone route): step 1/1. This is Probable malate:quinone oxidoreductase 2 from Staphylococcus epidermidis (strain ATCC 35984 / DSM 28319 / BCRC 17069 / CCUG 31568 / BM 3577 / RP62A).